Consider the following 217-residue polypeptide: Thymidylate kinase (217 aa).

12–19 (GIDGSGKS) contributes to the ATP binding site.

Belongs to the thymidylate kinase family.

The catalysed reaction is dTMP + ATP = dTDP + ADP. Phosphorylation of dTMP to form dTDP in both de novo and salvage pathways of dTTP synthesis. The protein is Thymidylate kinase of Cereibacter sphaeroides (strain ATCC 17023 / DSM 158 / JCM 6121 / CCUG 31486 / LMG 2827 / NBRC 12203 / NCIMB 8253 / ATH 2.4.1.) (Rhodobacter sphaeroides).